Reading from the N-terminus, the 477-residue chain is Glutamate--tRNA ligase 2 (477 aa).

Positions 9 to 19 (PSPTGFLHIGG) match the 'HIGH' region motif. The short motif at 238–242 (KLSKR) is the 'KMSKS' region element. K241 is an ATP binding site.

The protein belongs to the class-I aminoacyl-tRNA synthetase family. Glutamate--tRNA ligase type 1 subfamily. As to quaternary structure, monomer.

Its subcellular location is the cytoplasm. It catalyses the reaction tRNA(Glu) + L-glutamate + ATP = L-glutamyl-tRNA(Glu) + AMP + diphosphate. Functionally, catalyzes the attachment of glutamate to tRNA(Glu) in a two-step reaction: glutamate is first activated by ATP to form Glu-AMP and then transferred to the acceptor end of tRNA(Glu). The polypeptide is Glutamate--tRNA ligase 2 (Paramagnetospirillum magneticum (strain ATCC 700264 / AMB-1) (Magnetospirillum magneticum)).